The sequence spans 123 residues: Iron-sulfur cluster insertion protein ErpA (123 aa).

3 residues coordinate iron-sulfur cluster: cysteine 51, cysteine 115, and cysteine 117.

This sequence belongs to the HesB/IscA family. As to quaternary structure, homodimer. Iron-sulfur cluster serves as cofactor.

Required for insertion of 4Fe-4S clusters for at least IspG. This Halorhodospira halophila (strain DSM 244 / SL1) (Ectothiorhodospira halophila (strain DSM 244 / SL1)) protein is Iron-sulfur cluster insertion protein ErpA.